We begin with the raw amino-acid sequence, 497 residues long: Probable cytosol aminopeptidase (497 aa).

2 residues coordinate Mn(2+): lysine 264 and aspartate 269. The active site involves lysine 276. Residues aspartate 287, aspartate 346, and glutamate 348 each contribute to the Mn(2+) site. Residue arginine 350 is part of the active site.

It belongs to the peptidase M17 family. The cofactor is Mn(2+).

Its subcellular location is the cytoplasm. The catalysed reaction is Release of an N-terminal amino acid, Xaa-|-Yaa-, in which Xaa is preferably Leu, but may be other amino acids including Pro although not Arg or Lys, and Yaa may be Pro. Amino acid amides and methyl esters are also readily hydrolyzed, but rates on arylamides are exceedingly low.. It catalyses the reaction Release of an N-terminal amino acid, preferentially leucine, but not glutamic or aspartic acids.. Its function is as follows. Presumably involved in the processing and regular turnover of intracellular proteins. Catalyzes the removal of unsubstituted N-terminal amino acids from various peptides. In Persephonella marina (strain DSM 14350 / EX-H1), this protein is Probable cytosol aminopeptidase.